The chain runs to 367 residues: Aspartate-semialdehyde dehydrogenase (367 aa).

Residues 10-13 (RGMV), 37-38 (TS), and Q73 contribute to the NADP(+) site. R102 contributes to the phosphate binding site. C135 (acyl-thioester intermediate) is an active-site residue. C135 bears the S-cysteinyl cysteine; in inhibited form mark. Residue Q162 participates in substrate binding. NADP(+) contacts are provided by residues 165–169 (SGGGA), R173, and P193. E241 contributes to the substrate binding site. K244 is a binding site for phosphate. R267 lines the substrate pocket. Catalysis depends on H274, which acts as the Proton acceptor. Q350 lines the NADP(+) pocket.

It belongs to the aspartate-semialdehyde dehydrogenase family. In terms of assembly, homodimer.

It catalyses the reaction L-aspartate 4-semialdehyde + phosphate + NADP(+) = 4-phospho-L-aspartate + NADPH + H(+). It functions in the pathway amino-acid biosynthesis; L-lysine biosynthesis via DAP pathway; (S)-tetrahydrodipicolinate from L-aspartate: step 2/4. It participates in amino-acid biosynthesis; L-methionine biosynthesis via de novo pathway; L-homoserine from L-aspartate: step 2/3. The protein operates within amino-acid biosynthesis; L-threonine biosynthesis; L-threonine from L-aspartate: step 2/5. Its activity is regulated as follows. Is inhibited by L- and D-cystine, and by other cystine derivatives, via the formation of a covalently bound cysteine at the active site Cys-135. In terms of biological role, catalyzes the NADPH-dependent formation of L-aspartate-semialdehyde (L-ASA) by the reductive dephosphorylation of L-aspartyl-4-phosphate. The chain is Aspartate-semialdehyde dehydrogenase from Escherichia coli (strain K12).